Here is a 949-residue protein sequence, read N- to C-terminus: ATPase 1, plasma membrane-type (949 aa).

Ser2 is modified (N-acetylserine). Over 2–61 the chain is Cytoplasmic; the sequence is SGLEDIKNETVDLEKIPIEEVFQQLKCTREGLTTQEGEDRIVIFGPNKLEEKKESKILKF. The chain crosses the membrane as a helical span at residues 62–81; sequence LGFMWNPLSWVMEAAALMAI. Residues 82–93 lie on the Extracellular side of the membrane; it reads ALANGDNRPPDW. The helical transmembrane segment at 94–114 threads the bilayer; the sequence is QDFVGIICLLVINSTISFIEE. At 115 to 243 the chain is on the cytoplasmic side; the sequence is NNAGNAAAAL…GHFQKVLTSI (129 aa). A helical transmembrane segment spans residues 244 to 264; it reads GNFCICSIAIGIAIEIVVMYP. Topologically, residues 265-273 are extracellular; it reads IQHRKYRDG. A helical membrane pass occupies residues 274 to 291; sequence IDNLLVLLIGGIPIAMPT. Topologically, residues 292–643 are cytoplasmic; it reads VLSVTMAIGS…TSRAIFQRMK (352 aa). Asp329 (4-aspartylphosphate intermediate) is an active-site residue. 2 residues coordinate Mg(2+): Asp588 and Asp592. A helical transmembrane segment spans residues 644-665; the sequence is NYTIYAVSITIRIVFGFMLIAL. Residues 666 to 670 lie on the Extracellular side of the membrane; it reads IWEFD. A helical membrane pass occupies residues 671 to 693; it reads FSAFMVLIIAILNDGTIMTISKD. The Cytoplasmic segment spans residues 694-709; that stretch reads RVKPSPTPDSWKLKEI. The helical transmembrane segment at 710 to 730 threads the bilayer; sequence FATGIVLGGYQAIMSVIFFWA. Over 731-751 the chain is Extracellular; the sequence is AHKTDFFSDKFGVRSIRDNND. The chain crosses the membrane as a helical span at residues 752 to 772; the sequence is ELMGAVYLQVSIISQALIFVT. The Cytoplasmic portion of the chain corresponds to 773–784; it reads RSRSWSFVERPG. A helical membrane pass occupies residues 785 to 805; that stretch reads ALLMIAFVIAQLVATLIAVYA. At 806–813 the chain is on the extracellular side; the sequence is DWTFAKVK. A helical transmembrane segment spans residues 814–834; sequence GIGWGWAGVIWIYSIVTYFPQ. Topologically, residues 835–949 are cytoplasmic; the sequence is DILKFAIRYI…IDTAGHHYTV (115 aa). Thr881 is modified (phosphothreonine). Phosphoserine occurs at positions 899 and 931. The interval 947 to 949 is interaction with 14-3-3 proteins; it reads YTV. Thr948 carries the phosphothreonine modification.

It belongs to the cation transport ATPase (P-type) (TC 3.A.3) family. Type IIIA subfamily. Binds to 14-3-3 proteins. The binding is induced by phosphorylation of Thr-948. Binding to 14-3-3 proteins activates the H(+)-ATPase. Interacts with PPI1; this interaction promotes ATPase activity. Interacts with PSY1R. Part of a functional complex containing PSKR1, BAK1, CNGC17, and AHA. Interacts with CNGC17 and PSKR1. Triggered by SAUR9 via the phosphorylation of the C-terminal autoinhibitory domain. Interacts with AHA2. Binds to CBC1 and CBC2. In terms of processing, phosphorylated, probably by PHOT1 and PHOT2, at C-terminal Thr-948 in guard cells in response to blue light to induce stomatal opening. As to expression, expressed in guard cells, mesophyll cells, leaves and roots.

The protein resides in the cell membrane. The catalysed reaction is ATP + H2O + H(+)(in) = ADP + phosphate + 2 H(+)(out). Phosphorylation on Thr residues is repressed by tyrphostin 9, sphingosine, GW5074 and BML-265. By contrast, the fungal phytotoxin fusicoccin (FC) promotes phosphorylation of Thr-948 independently to BHP, thus leading to large stomatal opening. The plasma membrane H(+) ATPase of plants and fungi generates a proton gradient that drives the active transport of nutrients by H(+)-symport. The resulting external acidification and/or internal alkinization may mediate growth responses. Forms a functional cation-translocating unit with CNGC17 that is activated by PSKR1/BAK1 and possibly other BAK1/RLK complexes. Promotes stomatal opening in response to blue light. The polypeptide is ATPase 1, plasma membrane-type (Arabidopsis thaliana (Mouse-ear cress)).